The following is a 261-amino-acid chain: Homeobox-leucine zipper protein HOX24 (261 aa).

2 disordered regions span residues 42 to 67 (AAAA…RKRR) and 160 to 188 (KLNE…NSVM). Over residues 46–61 (GRGGGDGDGGGGGGGG) the composition is skewed to gly residues. Residues 61 to 121 (GGERKRRFTE…NKRARWRSKQ (61 aa)) constitute a DNA-binding region (homeobox). A leucine-zipper region spans residues 120–164 (KQIEHDYAALRAQYDALHARVESLRQEKLALADQVDELRGKLNER).

This sequence belongs to the HD-ZIP homeobox family. Class I subfamily. As to expression, expressed in roots and panicles.

The protein localises to the nucleus. Probable transcription factor. This is Homeobox-leucine zipper protein HOX24 (HOX24) from Oryza sativa subsp. japonica (Rice).